The sequence spans 306 residues: Putative syntaxin-131 (306 aa).

Methionine 1 carries the post-translational modification N-acetylmethionine. At 1-276 (MNDLLKGSLE…AVKSQKSSRK (276 aa)) the chain is on the cytoplasmic side. Residues 11–23 (FSRDRSNRSDIES) show a composition bias toward basic and acidic residues. Residues 11 to 35 (FSRDRSNRSDIESGHGPGNSGDLGL) form a disordered region. Coiled coils occupy residues 35–72 (LSGFFKKVQEIEKQYEKLDKHLNKLQGAHEETKAVTKA) and 134–162 (KKKFKDKISEFQTLRQNIQQEYREVVERR). Residues 205–267 (LAEIQERHDA…QSGNNQLTKA (63 aa)) form the t-SNARE coiled-coil homology domain. A helical; Anchor for type IV membrane protein transmembrane segment spans residues 277-297 (WMCIAILILLIIIIITVISVL). Over 298 to 306 (KPWTQKNGA) the chain is Vesicular.

This sequence belongs to the syntaxin family. As to quaternary structure, part of the t-SNARE complex.

The protein localises to the membrane. Its function is as follows. Vesicle trafficking protein that functions in the secretory pathway. This chain is Putative syntaxin-131 (SYP131), found in Arabidopsis thaliana (Mouse-ear cress).